Reading from the N-terminus, the 363-residue chain is Copper-containing nitrite reductase (363 aa).

The N-terminal stretch at 1–24 (MSVFRSVLGACVLLGSCASSLALA) is a signal peptide. Plastocyanin-like domains follow at residues 25-193 (GGAE…YDRV) and 194-363 (YTIG…EPKQ). The Cu cation site is built by H113, H118, H153, C154, H163, M168, and H324.

The protein belongs to the multicopper oxidase family. In terms of assembly, homotrimer. Cu(2+) is required as a cofactor. Cu(+) serves as cofactor. It depends on FAD as a cofactor.

It localises to the periplasm. The catalysed reaction is nitric oxide + Fe(III)-[cytochrome c] + H2O = Fe(II)-[cytochrome c] + nitrite + 2 H(+). It functions in the pathway nitrogen metabolism; nitrate reduction (denitrification); dinitrogen from nitrate: step 2/4. This chain is Copper-containing nitrite reductase (nirK), found in Pseudomonas chlororaphis (Pseudomonas aureofaciens).